The primary structure comprises 681 residues: Oligopeptidase A (681 aa).

Residue His-470 participates in Zn(2+) binding. Glu-471 is a catalytic residue. Positions 474 and 477 each coordinate Zn(2+).

The protein belongs to the peptidase M3 family. The cofactor is Zn(2+).

The enzyme catalyses Hydrolysis of oligopeptides, with broad specificity. Gly or Ala commonly occur as P1 or P1' residues, but more distant residues are also important, as is shown by the fact that Z-Gly-Pro-Gly-|-Gly-Pro-Ala is cleaved, but not Z-(Gly)(5).. In terms of biological role, may play a specific role in the degradation of signal peptides after they are released from precursor forms of secreted proteins. Can cleave N-acetyl-L-Ala(4). This chain is Oligopeptidase A (prlC), found in Haemophilus influenzae (strain ATCC 51907 / DSM 11121 / KW20 / Rd).